A 297-amino-acid chain; its full sequence is 4-hydroxy-tetrahydrodipicolinate synthase (297 aa).

Residue T50 participates in pyruvate binding. Y138 (proton donor/acceptor) is an active-site residue. Residue K166 is the Schiff-base intermediate with substrate of the active site. I208 is a binding site for pyruvate.

Belongs to the DapA family. In terms of assembly, homotetramer; dimer of dimers.

Its subcellular location is the cytoplasm. The catalysed reaction is L-aspartate 4-semialdehyde + pyruvate = (2S,4S)-4-hydroxy-2,3,4,5-tetrahydrodipicolinate + H2O + H(+). It functions in the pathway amino-acid biosynthesis; L-lysine biosynthesis via DAP pathway; (S)-tetrahydrodipicolinate from L-aspartate: step 3/4. Catalyzes the condensation of (S)-aspartate-beta-semialdehyde [(S)-ASA] and pyruvate to 4-hydroxy-tetrahydrodipicolinate (HTPA). The chain is 4-hydroxy-tetrahydrodipicolinate synthase from Haemophilus ducreyi (strain 35000HP / ATCC 700724).